A 267-amino-acid chain; its full sequence is Undecaprenyl-diphosphatase (267 aa).

A run of 8 helical transmembrane segments spans residues 1–21, 40–60, 83–103, 111–131, 144–164, 189–209, 219–239, and 245–265; these read MTLFHLILVAAIQGLTEFLPV, GLAIDVAVHVGSLLAVILYFW, AFLALCLIIATIPVMIAGLII, MMRSVAVIGWTMLGFGLVLYW, GWTLKDAFLMGLAQILSLIPG, AMLMSIPTIIASGAVLGADVI, DGALAAALAFVSALLALALMM, and VSFTPYVVYRVILGLILLVYA.

It belongs to the UppP family.

The protein resides in the cell inner membrane. The catalysed reaction is di-trans,octa-cis-undecaprenyl diphosphate + H2O = di-trans,octa-cis-undecaprenyl phosphate + phosphate + H(+). In terms of biological role, catalyzes the dephosphorylation of undecaprenyl diphosphate (UPP). Confers resistance to bacitracin. This Roseobacter denitrificans (strain ATCC 33942 / OCh 114) (Erythrobacter sp. (strain OCh 114)) protein is Undecaprenyl-diphosphatase.